Here is a 425-residue protein sequence, read N- to C-terminus: Adenylosuccinate synthetase (425 aa).

GTP-binding positions include G12–K18 and G40–T42. D13 (proton acceptor) is an active-site residue. Positions 13 and 40 each coordinate Mg(2+). Residues D13 to K16, N38 to H41, T130, R144, Q224, T239, and R301 each bind IMP. The active-site Proton donor is H41. T297–R303 provides a ligand contact to substrate. GTP is bound by residues R303, K329 to D331, and S411 to S413.

Belongs to the adenylosuccinate synthetase family. In terms of assembly, homodimer. Requires Mg(2+) as cofactor.

Its subcellular location is the cytoplasm. It catalyses the reaction IMP + L-aspartate + GTP = N(6)-(1,2-dicarboxyethyl)-AMP + GDP + phosphate + 2 H(+). It participates in purine metabolism; AMP biosynthesis via de novo pathway; AMP from IMP: step 1/2. Plays an important role in the de novo pathway of purine nucleotide biosynthesis. Catalyzes the first committed step in the biosynthesis of AMP from IMP. The chain is Adenylosuccinate synthetase from Wolbachia pipientis subsp. Culex pipiens (strain wPip).